Reading from the N-terminus, the 208-residue chain is RNA chaperone ProQ (208 aa).

2 stretches are compositionally biased toward basic and acidic residues: residues 99–115 and 126–135; these read AQET…EKNK and PAKDKPENTA. A disordered region spans residues 99–149; it reads AQETLKESKAKVAEKNKATNKAAAKKAPAKDKPENTAKAKPKTAKKPAKPK. A compositionally biased stretch (basic residues) spans 137 to 149; it reads AKPKTAKKPAKPK.

The protein belongs to the ProQ family.

The protein localises to the cytoplasm. Its function is as follows. RNA chaperone with significant RNA binding, RNA strand exchange and RNA duplexing activities. In Idiomarina loihiensis (strain ATCC BAA-735 / DSM 15497 / L2-TR), this protein is RNA chaperone ProQ.